The following is a 223-amino-acid chain: MTRDRELQALLRLTAWLSPAFPIGGFAYSGGLERAVADGLVTDAASLAAWIGTLVGNGSAWNDAVLLAESHRQQAQPARLAEVAALAEALAGSRERHQETMLLGEAFLAAARAWPDGVFERLPDKVAYPIAVGAVTGAHGIMPEKALAAFLHAYVSQAVSSGIRLGVAGQRDGLAVLAGLEDHIAEVARRAAASALDDLGSATVQADIASLRHETQATRLFRS.

Belongs to the UreF family. In terms of assembly, ureD, UreF and UreG form a complex that acts as a GTP-hydrolysis-dependent molecular chaperone, activating the urease apoprotein by helping to assemble the nickel containing metallocenter of UreC. The UreE protein probably delivers the nickel.

It is found in the cytoplasm. Required for maturation of urease via the functional incorporation of the urease nickel metallocenter. This Rhizobium leguminosarum bv. viciae protein is Urease accessory protein UreF.